A 345-amino-acid chain; its full sequence is Putative mediator of RNA polymerase II transcription subunit 7 (345 aa).

Low complexity-rich tracts occupy residues 1–27 and 88–126; these read MNTSQQQQQQQQQQQQQQQQQQQTPQQ and NNNNNNNNNNNNNNNNNNNNNNNNNNNNNNNNNNNNNNN. Disordered stretches follow at residues 1 to 130 and 292 to 315; these read MNTS…KATT and TPLPTNITSPTKNLMSPTKLNNSQ.

This sequence belongs to the Mediator complex subunit 7 family. In terms of assembly, component of the Mediator complex.

It is found in the nucleus. Component of the Mediator complex, a coactivator involved in the regulated transcription of nearly all RNA polymerase II-dependent genes. Mediator functions as a bridge to convey information from gene-specific regulatory proteins to the basal RNA polymerase II transcription machinery. Mediator is recruited to promoters by direct interactions with regulatory proteins and serves as a scaffold for the assembly of a functional preinitiation complex with RNA polymerase II and the general transcription factors. This Dictyostelium discoideum (Social amoeba) protein is Putative mediator of RNA polymerase II transcription subunit 7 (med7).